The sequence spans 2210 residues: Genome polyprotein (2210 aa).

The interval 1 to 22 (MAPVVSRDRHRHKIPKPHQPAP) is disordered. In terms of domain architecture, SF3 helicase spans 426–585 (SSKIMELSTI…ADFLRQHPGV (160 aa)). 456–463 (GPPGHGKS) contributes to the ATP binding site. Y940 is modified (O-(5'-phospho-RNA)-tyrosine). The 146-residue stretch at 991–1136 (GNNCEDLPLH…KVFTPITDAP (146 aa)) folds into the Peptidase C24 domain. Catalysis depends on for 3CLpro activity residues H1025, D1039, and C1103. In terms of domain architecture, RdRp catalytic spans 1379–1501 (DHCLELDYSK…TIPSHLTKSI (123 aa)). The disordered stretch occupies residues 1654 to 1686 (SDLIREGNMSDNKSTPEQQHESSRAMDAGATGA).

In terms of processing, specific enzymatic cleavages by its own cysteine protease yield mature proteins. The protease cleaves itself from the nascent polyprotein autocatalytically. Precursor p41 can be cleaved by viral 3CLpro into protein p19 and VPg, or cleaved by host protease into protein p23/2 and protein p18. VPg is uridylylated by the polymerase and is covalently attached to the 5'-end of the polyadenylated genomic and subgenomic RNAs. This uridylylated form acts as a nucleotide-peptide primer for the polymerase.

The protein resides in the virion. The protein localises to the host cytoplasm. It catalyses the reaction a ribonucleoside 5'-triphosphate + H2O = a ribonucleoside 5'-diphosphate + phosphate + H(+). The catalysed reaction is Endopeptidase with a preference for cleavage when the P1 position is occupied by Glu-|-Xaa and the P1' position is occupied by Gly-|-Yaa.. The enzyme catalyses RNA(n) + a ribonucleoside 5'-triphosphate = RNA(n+1) + diphosphate. Displays NTPase activity, but no helicase activity. Induces the formation of convoluted membranes derived from the host ER. These remodeled membranes probably form the viral factories that contain the replication complex. Together with NS2 and NS4, initiates the formation of the replication complex. In terms of biological role, viral genome-linked protein is covalently linked to the 5'-end of the positive-strand, negative-strand genomic RNAs and subgenomic RNA. Acts as a genome-linked replication primer. May recruit ribosome to viral RNA thereby promoting viral proteins translation. Interacts with host translation initiation complex to allow the translation of viral proteins. Its function is as follows. Processes the polyprotein. 3CLpro-RdRp is first released by autocleavage, then all other proteins are cleaved. May cleave polyadenylate-binding protein thereby inhibiting cellular translation. Functionally, replicates genomic and antigenomic RNA by recognizing replications specific signals. Also transcribes a subgenomic mRNA by initiating RNA synthesis internally on antigenomic RNA. This sgRNA codes for structural proteins. Catalyzes the covalent attachment VPg with viral RNAs. Capsid protein self assembles to form an icosahedral capsid with a T=3 symmetry, about 35 nm in diameter, and consisting of 180 capsid proteins. A smaller form of capsid with a diameter of 23 nm might be capsid proteins assembled as icosahedron with T=1 symmetry. The capsid encapsulate VP2 proteins and genomic or subgenomic RNA. Attaches virion to target cells by binding histo-blood group antigens, inducing endocytosis of the viral particle. Acidification of the endosome induces conformational change of capsid protein thereby injecting virus genomic RNA into host cytoplasm. This chain is Genome polyprotein, found in Bos taurus (Bovine).